A 518-amino-acid polypeptide reads, in one-letter code: Integrator complex subunit 14 (518 aa).

One can recognise a VWFA domain in the interval 2-204 (PTVVVMDVSL…KNVQSMFGKL (203 aa)). Serine 10, serine 12, and threonine 86 together coordinate Mg(2+).

The protein belongs to the Integrator subunit 14 family. As to quaternary structure, component of the Integrator complex, composed of core subunits INTS1, INTS2, INTS3, INTS4, INTS5, INTS6, INTS7, INTS8, INTS9/RC74, INTS10, INTS11/CPSF3L, INTS12, INTS13, INTS14 and INTS15. The core complex associates with protein phosphatase 2A subunits PPP2CA and PPP2R1A, to form the Integrator-PP2A (INTAC) complex. INTS14 is part of the tail subcomplex, composed of INTS10, INTS13, INTS14 and INTS15.

Its subcellular location is the nucleus. Its function is as follows. Component of the integrator complex, a multiprotein complex that terminates RNA polymerase II (Pol II) transcription in the promoter-proximal region of genes. The integrator complex provides a quality checkpoint during transcription elongation by driving premature transcription termination of transcripts that are unfavorably configured for transcriptional elongation: the complex terminates transcription by (1) catalyzing dephosphorylation of the C-terminal domain (CTD) of Pol II subunit POLR2A/RPB1 and SUPT5H/SPT5, (2) degrading the exiting nascent RNA transcript via endonuclease activity and (3) promoting the release of Pol II from bound DNA. The integrator complex is also involved in terminating the synthesis of non-coding Pol II transcripts, such as enhancer RNAs (eRNAs), small nuclear RNAs (snRNAs), telomerase RNAs and long non-coding RNAs (lncRNAs). Within the integrator complex, INTS14 is part of the integrator tail module that acts as a platform for the recruitment of transcription factors at promoters. This chain is Integrator complex subunit 14, found in Xenopus tropicalis (Western clawed frog).